Consider the following 254-residue polypeptide: 5'-nucleotidase SurE (254 aa).

Residues D8, D9, S39, and N97 each contribute to the a divalent metal cation site.

This sequence belongs to the SurE nucleotidase family. Requires a divalent metal cation as cofactor.

It is found in the cytoplasm. It carries out the reaction a ribonucleoside 5'-phosphate + H2O = a ribonucleoside + phosphate. Nucleotidase that shows phosphatase activity on nucleoside 5'-monophosphates. The protein is 5'-nucleotidase SurE of Alkaliphilus metalliredigens (strain QYMF).